The chain runs to 876 residues: Alanine--tRNA ligase (876 aa).

K74 is modified (N6-acetyllysine). 4 residues coordinate Zn(2+): H564, H568, C666, and H670.

This sequence belongs to the class-II aminoacyl-tRNA synthetase family. In terms of assembly, homotetramer. Requires Zn(2+) as cofactor.

The protein localises to the cytoplasm. It catalyses the reaction tRNA(Ala) + L-alanine + ATP = L-alanyl-tRNA(Ala) + AMP + diphosphate. Its function is as follows. Catalyzes the attachment of alanine to tRNA(Ala) in a two-step reaction: alanine is first activated by ATP to form Ala-AMP and then transferred to the acceptor end of tRNA(Ala). Also edits incorrectly charged Ser-tRNA(Ala) and Gly-tRNA(Ala) via its editing domain. This is Alanine--tRNA ligase from Shigella boydii serotype 4 (strain Sb227).